Reading from the N-terminus, the 515-residue chain is Na(+)/H(+) antiporter NhaB (515 aa).

13 helical membrane-spanning segments follow: residues 23-43 (IIVF…FIAG), 44-64 (WCLV…YPLQ), 88-108 (IMAS…IYFM), 119-139 (LLIT…SAAF), 143-163 (FLDA…FYGV), 202-222 (LMMH…VGEP), 238-258 (FFIR…ITCV), 303-323 (GIIG…VGLI), 324-344 (GLSV…STIG), 357-377 (LVVF…GPII), 389-409 (LLLF…VFVA), 447-467 (ATPN…APLI), and 477-497 (MALP…EYIL).

This sequence belongs to the NhaB Na(+)/H(+) (TC 2.A.34) antiporter family.

It is found in the cell inner membrane. It catalyses the reaction 2 Na(+)(in) + 3 H(+)(out) = 2 Na(+)(out) + 3 H(+)(in). In terms of biological role, na(+)/H(+) antiporter that extrudes sodium in exchange for external protons. This Mannheimia succiniciproducens (strain KCTC 0769BP / MBEL55E) protein is Na(+)/H(+) antiporter NhaB.